Consider the following 314-residue polypeptide: Glutathione synthetase (314 aa).

The ATP-grasp domain occupies 125 to 309 (KLFVMNFPQL…VAAKVWDTIE (185 aa)). 151-207 (RDKHGAVVMKPLHGHGGAAVFRVMPQDMNFGSLFDMFTVTFKEPWVIQQFIPEVKHG) provides a ligand contact to ATP. Residues glutamate 280 and asparagine 282 each coordinate Mg(2+).

Belongs to the prokaryotic GSH synthase family. Mg(2+) is required as a cofactor. The cofactor is Mn(2+).

The catalysed reaction is gamma-L-glutamyl-L-cysteine + glycine + ATP = glutathione + ADP + phosphate + H(+). Its pathway is sulfur metabolism; glutathione biosynthesis; glutathione from L-cysteine and L-glutamate: step 2/2. This chain is Glutathione synthetase, found in Bradyrhizobium diazoefficiens (strain JCM 10833 / BCRC 13528 / IAM 13628 / NBRC 14792 / USDA 110).